The sequence spans 121 residues: Putative inactive aspartokinase 3 HI_1632 (121 aa).

This sequence belongs to the aspartokinase family.

The polypeptide is Putative inactive aspartokinase 3 HI_1632 (Haemophilus influenzae (strain ATCC 51907 / DSM 11121 / KW20 / Rd)).